The following is a 489-amino-acid chain: Virion host shutoff protein (489 aa).

Disordered regions lie at residues 110 to 135 (EEAS…AFSN), 142 to 161 (SLAS…PSAA), 285 to 319 (RSQT…ETRV), and 332 to 364 (GYED…LTPP). A compositionally biased stretch (polar residues) spans 124-134 (ITDSRPSSAFS).

It belongs to the herpesviridae VHS protein family. Interacts with human EIF4H, EIF4A1 and EIF4A2; interaction with eIF4AI and EIF4A2 presumably allows Vhs protein to associate with the eIF4F cap-binding complex.

The protein resides in the virion. Its function is as follows. Minor structural protein that acts as an endoribonuclease during lytic infection. Degrades host mRNAs in the cytoplasm by cutting them at preferred sites, including some in regions of translation initiation. Together with inhibition of host splicing by ICP27, contributes to an overall decrease in host protein synthesis. Also, after the onset of viral transcription, accelerates the turnover of viral mRNA, thereby facilitating the sequential expression of different classes of viral genes. Binds translation initiation factors eIF4H, eIF4AI, and eIF4AII, thereby may interact directly with the translation initiation complex and thus digest specifically mRNAs. Also impedes antigen presentation by major histocompatibility complex class I and class II molecules, inhibits secretion of cytokines that would otherwise recruit lymphocytes and neutrophils cells to the site of infection and blocks the activation of dendritic cells. Plays a role in the inhibition of interferon-beta activation by the cGAS/STING pathway. Mechanistically, down-regulates the expression of host cGAS/MB21D1. Also decreases the accumulation of other interferon-induced mRNAs such as host IFIT3 or CH25H to subvert their antiviral activity. This Human herpesvirus 1 (strain 17) (HHV-1) protein is Virion host shutoff protein (UL41).